The chain runs to 347 residues: Endo-1,4-beta-xylanase 3 (347 aa).

The N-terminal stretch at 1-16 is a signal peptide; sequence MKANVILCLLAPLVAA. Residues 17–45 constitute a propeptide that is removed on maturation; it reads LPTETIHLDPELAALRANLTERTADLWDR. Q46 carries the pyrrolidone carboxylic acid modification. Positions 46–345 constitute a GH10 domain; sequence QASQSIDQLI…KPAYNSIVGI (300 aa). Catalysis depends on E176, which acts as the Proton donor. Residue E282 is the Nucleophile of the active site. C300 and C306 are oxidised to a cystine.

This sequence belongs to the glycosyl hydrolase 10 (cellulase F) family. Monomer. In terms of processing, not glycosylated.

Its subcellular location is the secreted. It catalyses the reaction Endohydrolysis of (1-&gt;4)-beta-D-xylosidic linkages in xylans.. Its pathway is glycan degradation; xylan degradation. Functionally, glycoside hydrolase involved in the hydrolysis of xylan, a major plant cell wall hemicellulose made up of 1,4-beta-linked D-xylopyranose residues. Catalyzes the endohydrolysis of the main-chain 1,4-beta-glycosidic bonds connecting the xylose subunits yielding various xylooligosaccharides and xylose. Produces xylobiose and xylotriose as the main degradation products. The chain is Endo-1,4-beta-xylanase 3 (xyn3) from Hypocrea jecorina (strain QM6a) (Trichoderma reesei).